A 118-amino-acid polypeptide reads, in one-letter code: Large ribosomal subunit protein bL19 (118 aa).

This sequence belongs to the bacterial ribosomal protein bL19 family.

Functionally, this protein is located at the 30S-50S ribosomal subunit interface and may play a role in the structure and function of the aminoacyl-tRNA binding site. This is Large ribosomal subunit protein bL19 from Campylobacter jejuni subsp. jejuni serotype O:6 (strain 81116 / NCTC 11828).